The sequence spans 323 residues: Biotin synthase (323 aa).

A Radical SAM core domain is found at 46-264 (TEIQLSSLLS…IAVARITMPR (219 aa)). [4Fe-4S] cluster contacts are provided by C61, C65, and C68. [2Fe-2S] cluster contacts are provided by C105, C136, C196, and R268.

Belongs to the radical SAM superfamily. Biotin synthase family. Homodimer. Requires [4Fe-4S] cluster as cofactor. It depends on [2Fe-2S] cluster as a cofactor.

The catalysed reaction is (4R,5S)-dethiobiotin + (sulfur carrier)-SH + 2 reduced [2Fe-2S]-[ferredoxin] + 2 S-adenosyl-L-methionine = (sulfur carrier)-H + biotin + 2 5'-deoxyadenosine + 2 L-methionine + 2 oxidized [2Fe-2S]-[ferredoxin]. It functions in the pathway cofactor biosynthesis; biotin biosynthesis; biotin from 7,8-diaminononanoate: step 2/2. Its function is as follows. Catalyzes the conversion of dethiobiotin (DTB) to biotin by the insertion of a sulfur atom into dethiobiotin via a radical-based mechanism. The protein is Biotin synthase of Bordetella avium (strain 197N).